We begin with the raw amino-acid sequence, 631 residues long: Eukaryotic translation initiation factor 2-alpha kinase 1 (631 aa).

Residues 1–34 are disordered; that stretch reads MQGGNSGVRKREEEGGGEGAVAAPPAIDFPAESS. The short motif at 85 to 104 is the SIFI-degron element; the sequence is LRSRQVFKLLCQTFIKMGLL. In terms of domain architecture, Protein kinase spans 167–583; that stretch reads FEEVAILGKG…AVQLLQSELF (417 aa). Residues 173–181 and Lys-196 each bind ATP; that span reads LGKGGYGRV. The interval 260 to 301 is disordered; sequence QEEDREQYDVKNDESSSSSIVFAEPTPEKGKRFGESDTENQN. Residue Thr-285 is modified to Phosphothreonine. Over residues 285 to 301 the composition is skewed to basic and acidic residues; that stretch reads TPEKGKRFGESDTENQN. An HRM 1 repeat occupies 410–415; that stretch reads ACPYVM. Residue Asp-442 is the Proton acceptor of the active site. Phosphothreonine; by autocatalysis is present on residues Thr-486 and Thr-488. The residue at position 493 (Thr-493) is a Phosphothreonine. One copy of the HRM 2 repeat lies at 552-557; sequence RCPVQA.

This sequence belongs to the protein kinase superfamily. Ser/Thr protein kinase family. GCN2 subfamily. Synthesized in an inactive form that binds to the N-terminal domain of CDC37. Has to be associated with a multiprotein complex containing Hsp90, CDC37 and PPP5C for maturation and activation by autophosphorylation. The phosphatase PPP5C modulates this activation. Homodimer; homodimerizes in presence of heme, forming a disulfide-linked inactive homodimer. Interacts with DELE1; binds both to full-length DELE1 and processed form of DELE1 (S-DELE1) in response to stress, leading to activate its protein kinase activity and trigger the integrated stress response (ISR). In terms of processing, activated by autophosphorylation; phosphorylated predominantly on serine and threonine residues, but also on tyrosine residues. Autophosphorylation at Thr-488 is required for kinase activation. The active autophosphorylated form apparently is largely refractory to cellular heme fluctuations. Ubiquitinated and degraded by the SIFI complex once the mitochondrial stress has been resolved, thereby providing stress response silencing. Within the SIFI complex, UBR4 initiates ubiquitin chain that are further elongated or branched by KCMF1.

The protein resides in the cytoplasm. The enzyme catalyses L-seryl-[protein] + ATP = O-phospho-L-seryl-[protein] + ADP + H(+). The catalysed reaction is L-threonyl-[protein] + ATP = O-phospho-L-threonyl-[protein] + ADP + H(+). With respect to regulation, in normal conditions, the protein kinase activity is inhibited; inhibition is relieved by various stress conditions. Inhibited by heme: in presence of heme, forms a disulfide-linked inactive homodimer. Heme depletion relieves inhibition and stimulates kinase activity by autophosphorylation. Inhibited by the heme metabolites biliverdin and bilirubin. Induced by oxidative stress generated by arsenite treatment. Binding of nitric oxide (NO) to the heme iron in the N-terminal heme-binding domain activates the kinase activity, while binding of carbon monoxide (CO) suppresses kinase activity. Protein kinase activity is also activated upon binding to DELE1 in response to various stress, triggering the integrated stress response (ISR): activated by full-length DELE1 in response to iron deficiency, while it is activated by the processed form of DELE1 (S-DELE1) in response to mitochondrial stress. Functionally, metabolic-stress sensing protein kinase that phosphorylates the alpha subunit of eukaryotic translation initiation factor 2 (EIF2S1/eIF-2-alpha) in response to various stress conditions. Key activator of the integrated stress response (ISR) required for adaptation to various stress, such as heme deficiency, oxidative stress, osmotic shock, mitochondrial dysfunction and heat shock. EIF2S1/eIF-2-alpha phosphorylation in response to stress converts EIF2S1/eIF-2-alpha in a global protein synthesis inhibitor, leading to a global attenuation of cap-dependent translation, while concomitantly initiating the preferential translation of ISR-specific mRNAs, such as the transcriptional activator ATF4, and hence allowing ATF4-mediated reprogramming. Acts as a key sensor of heme-deficiency: in normal conditions, binds hemin via a cysteine thiolate and histidine nitrogenous coordination, leading to inhibit the protein kinase activity. This binding occurs with moderate affinity, allowing it to sense the heme concentration within the cell: heme depletion relieves inhibition and stimulates kinase activity, activating the ISR. Thanks to this unique heme-sensing capacity, plays a crucial role to shut off protein synthesis during acute heme-deficient conditions. In red blood cells (RBCs), controls hemoglobin synthesis ensuring a coordinated regulation of the synthesis of its heme and globin moieties. It thereby plays an essential protective role for RBC survival in anemias of iron deficiency. Iron deficiency also triggers activation by full-length DELE1. Also activates the ISR in response to mitochondrial dysfunction: HRI/EIF2AK1 protein kinase activity is activated upon binding to the processed form of DELE1 (S-DELE1), thereby promoting the ATF4-mediated reprogramming. Also acts as an activator of mitophagy in response to mitochondrial damage: catalyzes phosphorylation of eIF-2-alpha (EIF2S1) following activation by S-DELE1, thereby promoting mitochondrial localization of EIF2S1, triggering PRKN-independent mitophagy. This Macaca fascicularis (Crab-eating macaque) protein is Eukaryotic translation initiation factor 2-alpha kinase 1.